Consider the following 214-residue polypeptide: tRNA (guanine-N(7)-)-methyltransferase (214 aa).

S-adenosyl-L-methionine is bound by residues aspartate 35, glutamate 60, asparagine 87, and aspartate 113. Aspartate 113 is a catalytic residue. Substrate-binding residues include lysine 117 and aspartate 149.

It belongs to the class I-like SAM-binding methyltransferase superfamily. TrmB family.

It catalyses the reaction guanosine(46) in tRNA + S-adenosyl-L-methionine = N(7)-methylguanosine(46) in tRNA + S-adenosyl-L-homocysteine. The protein operates within tRNA modification; N(7)-methylguanine-tRNA biosynthesis. Its function is as follows. Catalyzes the formation of N(7)-methylguanine at position 46 (m7G46) in tRNA. The sequence is that of tRNA (guanine-N(7)-)-methyltransferase from Prochlorococcus marinus (strain NATL1A).